The primary structure comprises 170 residues: Bifunctional protein PyrR (170 aa).

The short motif at 90–102 is the PRPP-binding element; the sequence is LVLVDDVLMSGRT.

It belongs to the purine/pyrimidine phosphoribosyltransferase family. PyrR subfamily.

It catalyses the reaction UMP + diphosphate = 5-phospho-alpha-D-ribose 1-diphosphate + uracil. Regulates the transcription of the pyrimidine nucleotide (pyr) operon in response to exogenous pyrimidines. In terms of biological role, also displays a weak uracil phosphoribosyltransferase activity which is not physiologically significant. The sequence is that of Bifunctional protein PyrR from Pseudomonas aeruginosa (strain LESB58).